The sequence spans 403 residues: Large ribosomal subunit protein uL3 (403 aa).

The segment at 1–37 is disordered; sequence MSHRKFSAPRHGSLGFLPRKRSSRHRGKVKSFPKDDP. Position 13 is a phosphoserine (Ser-13). Residues 18 to 31 are compositionally biased toward basic residues; sequence PRKRSSRHRGKVKS. Residue Lys-39 forms a Glycyl lysine isopeptide (Lys-Gly) (interchain with G-Cter in SUMO2) linkage. N6-acetyllysine is present on Lys-136. Glycyl lysine isopeptide (Lys-Gly) (interchain with G-Cter in SUMO2) cross-links involve residues Lys-224 and Lys-226. His-245 is modified (tele-methylhistidine). N6-acetyllysine; alternate is present on residues Lys-286 and Lys-294. A Glycyl lysine isopeptide (Lys-Gly) (interchain with G-Cter in SUMO2); alternate cross-link involves residue Lys-286. Lys-294 participates in a covalent cross-link: Glycyl lysine isopeptide (Lys-Gly) (interchain with G-Cter in SUMO1); alternate. At Ser-304 the chain carries Phosphoserine. Lys-366 is modified (N6-acetyllysine; alternate). Lys-366 participates in a covalent cross-link: Glycyl lysine isopeptide (Lys-Gly) (interchain with G-Cter in SUMO2); alternate. Lys-373 is modified (N6-acetyllysine). Residues Lys-386, Lys-393, and Lys-399 each participate in a glycyl lysine isopeptide (Lys-Gly) (interchain with G-Cter in SUMO2) cross-link.

It belongs to the universal ribosomal protein uL3 family. In terms of assembly, component of the large ribosomal subunit. Interacts with DHX33. Post-translationally, constitutively monomethylated at His-245 by METTL18. Methylation at His-245 regulates translation elongation by slowing ribosome traversal on tyrosine codons: slower elongation provides enough time for proper folding of synthesized proteins and prevents cellular aggregation of tyrosine-rich proteins It is not required for incorporation of RPL3 into ribosomes.

The protein localises to the nucleus. The protein resides in the nucleolus. It localises to the cytoplasm. Its function is as follows. Component of the large ribosomal subunit. The ribosome is a large ribonucleoprotein complex responsible for the synthesis of proteins in the cell. This Macaca fascicularis (Crab-eating macaque) protein is Large ribosomal subunit protein uL3 (RPL3).